The primary structure comprises 573 residues: MANRQQPTSMPIHKYRPYEQVDIADRTWPDNRVTVAPRWLSTDLRDGNQALIDPMSPARKREMFDLLVKMGYKEIEVGFPASGQTDFDFVRSIIEDETAIPDDVTISVLTQAREDLIERTVESLVGAKRATVHLYNATAPVFRRVVFRGSKDQIKQIAVDGTRLVVEYAEKLLDERTTFGYQYSPEIFTDTELDFALEVCEAVMDVWQPGPDREIILNLPATVERSTPSTHADRFEWMSRNLSRREYVCLSVHPHNDRGTAVAAAELALMAGADRIEGCLFGQGERTGNVDLVTLGMNLFSQGVDPQIDFSNIDEVRRTAEYCNQMEVHARHPYVGDLVYTSFSGSHQDAIKKGFDAMEADAAAKGVTVDDIEWAVPYLPIDPKDVGRSYEAVIRVNSQSGKGGIAYVLKNDHKLDLPRRMQIEFSKIIQTKTDAEGGEVTPKDIWAVFQDEYLPNPRNPWGRIQVKTGQTTTDKDGVDTLTVEASVDGVDTVLTGSGNGPISAFFDALQSVGIDVRLLDYTEHTMSEGASAQAASYIECAIDGQVLWGIGIDANTTRASLKAVVSAVNRAAR.

One can recognise a Pyruvate carboxyltransferase domain in the interval proline 37–aspartate 314. 4 residues coordinate Mg(2+): aspartate 46, histidine 253, histidine 255, and asparagine 289. The tract at residues asparagine 456 to arginine 573 is regulatory domain.

It belongs to the alpha-IPM synthase/homocitrate synthase family. LeuA type 2 subfamily. As to quaternary structure, homodimer. The cofactor is Mg(2+).

The protein localises to the cytoplasm. The catalysed reaction is 3-methyl-2-oxobutanoate + acetyl-CoA + H2O = (2S)-2-isopropylmalate + CoA + H(+). Its pathway is amino-acid biosynthesis; L-leucine biosynthesis; L-leucine from 3-methyl-2-oxobutanoate: step 1/4. In terms of biological role, catalyzes the condensation of the acetyl group of acetyl-CoA with 3-methyl-2-oxobutanoate (2-ketoisovalerate) to form 3-carboxy-3-hydroxy-4-methylpentanoate (2-isopropylmalate). The chain is 2-isopropylmalate synthase from Streptomyces avermitilis (strain ATCC 31267 / DSM 46492 / JCM 5070 / NBRC 14893 / NCIMB 12804 / NRRL 8165 / MA-4680).